A 547-amino-acid polypeptide reads, in one-letter code: Chaperonin GroEL (547 aa).

ATP contacts are provided by residues 30 to 33, Lys51, 87 to 91, Gly415, and Asp496; these read TLGP and DGTTT.

This sequence belongs to the chaperonin (HSP60) family. As to quaternary structure, forms a cylinder of 14 subunits composed of two heptameric rings stacked back-to-back. Interacts with the co-chaperonin GroES.

The protein resides in the cytoplasm. The enzyme catalyses ATP + H2O + a folded polypeptide = ADP + phosphate + an unfolded polypeptide.. Functionally, together with its co-chaperonin GroES, plays an essential role in assisting protein folding. The GroEL-GroES system forms a nano-cage that allows encapsulation of the non-native substrate proteins and provides a physical environment optimized to promote and accelerate protein folding. This is Chaperonin GroEL from Chlorobium phaeobacteroides (strain DSM 266 / SMG 266 / 2430).